A 299-amino-acid polypeptide reads, in one-letter code: Meso-diaminopimelate D-dehydrogenase (299 aa).

NADP(+) contacts are provided by residues 11–14, Arg-36, 67–70, 90–92, and 119–123; these read YGNI, CTPT, SFD, and AGWDP. Substrate contacts are provided by residues Asp-92, Asp-122, Phe-146, 152–153, Thr-171, Arg-181, His-227, and Asn-253; that span reads MG.

The protein belongs to the diaminopimelate dehydrogenase family. As to quaternary structure, homodimer.

The enzyme catalyses meso-2,6-diaminopimelate + NADP(+) + H2O = (S)-2-amino-6-oxoheptanedioate + NH4(+) + NADPH + H(+). It functions in the pathway amino-acid biosynthesis; L-lysine biosynthesis via DAP pathway; DL-2,6-diaminopimelate from (S)-tetrahydrodipicolinate: step 1/1. Catalyzes the reversible NADPH-dependent reductive amination of L-2-amino-6-oxopimelate, the acyclic form of L-tetrahydrodipicolinate, to generate the meso compound, D,L-2,6-diaminopimelate. Probably plays a role in lysine biosynthesis. Exhibits a high substrate specificity for meso-2,6-diaminopimelate (m-DAP), since the activity with L,L-2,6-diaminopimelate is less than 5% of the activity observed with m-DAP. Can use NAD(+) only very poorly since the activity observed in the presence of NAD(+) is about 14% of that with NADP(+). This chain is Meso-diaminopimelate D-dehydrogenase (ddh), found in Bacteroides fragilis (strain ATCC 25285 / DSM 2151 / CCUG 4856 / JCM 11019 / LMG 10263 / NCTC 9343 / Onslow / VPI 2553 / EN-2).